The primary structure comprises 396 residues: NAD(P)H oxidoreductase RTN4IP1, mitochondrial (396 aa).

Residues 1 to 40 (MGFLKTCVFRRNACTAVCFWRSQVVQKPSVRKISTTSPRS) constitute a mitochondrion transit peptide. Residues 52–393 (GSNEVLRFTQ…RGHARGKTVI (342 aa)) enclose the Enoyl reductase (ER) domain. Ser214, Gly216, Val217, Ser237, Tyr255, Asn276, Leu300, Ala341, Phe343, His386, Ala387, and Arg388 together coordinate NADPH.

The protein belongs to the zinc-containing alcohol dehydrogenase family. Quinone oxidoreductase subfamily. Interacts with RTN4, UQCRC1 and UQCRC2.

It is found in the mitochondrion matrix. Its subcellular location is the mitochondrion outer membrane. The enzyme catalyses a 3-demethylubiquinone + NADH + 2 H(+) = a 3-demethylubiquinol + NAD(+). The catalysed reaction is a 3-demethylubiquinone + NADPH + 2 H(+) = a 3-demethylubiquinol + NADP(+). It catalyses the reaction 3-demethylubiquinone-10 + NADH + 2 H(+) = 3-demethylubiquinol-10 + NAD(+). It carries out the reaction 3-demethylubiquinone-10 + NADPH + 2 H(+) = 3-demethylubiquinol-10 + NADP(+). It participates in cofactor biosynthesis; ubiquinone biosynthesis. In terms of biological role, NAD(P)H oxidoreductase involved in the ubiquinone biosynthetic pathway. Required for the O-methyltransferase activity of COQ3. Able to catalyze the oxidoreduction of 3-demethylubiquinone into 3-demethylubiquinol in vitro. However, it is unclear if 3-demethylubiquinone constitutes a substrate in vivo. May also play a role in the regulation of retinal ganglion cell (RGC) neurite outgrowth, and hence in the development of the inner retina and optic nerve. Appears to be a potent inhibitor of regeneration following spinal cord injury. This Bos taurus (Bovine) protein is NAD(P)H oxidoreductase RTN4IP1, mitochondrial (RTN4IP1).